A 481-amino-acid chain; its full sequence is Histidine--tRNA ligase, cytoplasmic (481 aa).

The tract at residues 1–48 (MSEPVVDNVTNKVEKMEVKEKTSAPPKEKKEKKSNKVQLKTPKGTQDY) is disordered. Basic and acidic residues predominate over residues 12 to 31 (KVEKMEVKEKTSAPPKEKKE).

This sequence belongs to the class-II aminoacyl-tRNA synthetase family.

Its subcellular location is the cytoplasm. The catalysed reaction is tRNA(His) + L-histidine + ATP = L-histidyl-tRNA(His) + AMP + diphosphate + H(+). The sequence is that of Histidine--tRNA ligase, cytoplasmic (hisS) from Dictyostelium discoideum (Social amoeba).